Consider the following 747-residue polypeptide: Pentatricopeptide repeat-containing protein At5g39710 (747 aa).

PPR repeat units follow at residues 133-167, 168-203, 204-238, 239-273, 274-308, 309-343, 344-378, 379-413, 414-448, 449-483, 484-518, 519-553, 554-588, 604-638, and 639-673; these read TSSV…GFMP, GVLS…QVSP, NVFT…GCLP, NVVT…GLEP, NLIS…GYSL, DEVT…GLTP, SVIT…GLCP, NERT…GFSP, SVVT…GLSP, DVVS…GIKP, DTIT…GLPP, DEFT…GVLP, DVVT…ESVP, EFKS…NHKP, and DGTA…GFLL.

Belongs to the PPR family. P subfamily.

This Arabidopsis thaliana (Mouse-ear cress) protein is Pentatricopeptide repeat-containing protein At5g39710 (EMB2745).